The sequence spans 358 residues: Protein-glutamate methylesterase/protein-glutamine glutaminase (358 aa).

The 118-residue stretch at 5 to 122 (SVLIIDDSAL…RNSLEAYTDE (118 aa)) folds into the Response regulatory domain. Asp56 is modified (4-aspartylphosphate). The 193-residue stretch at 159–351 (GISTEKLIII…RRILARLVGA (193 aa)) folds into the CheB-type methylesterase domain. Active-site residues include Ser171, His197, and Asp293.

Belongs to the CheB family. Post-translationally, phosphorylated by CheA. Phosphorylation of the N-terminal regulatory domain activates the methylesterase activity.

It localises to the cytoplasm. The enzyme catalyses [protein]-L-glutamate 5-O-methyl ester + H2O = L-glutamyl-[protein] + methanol + H(+). It catalyses the reaction L-glutaminyl-[protein] + H2O = L-glutamyl-[protein] + NH4(+). Functionally, involved in chemotaxis. Part of a chemotaxis signal transduction system that modulates chemotaxis in response to various stimuli. Catalyzes the demethylation of specific methylglutamate residues introduced into the chemoreceptors (methyl-accepting chemotaxis proteins or MCP) by CheR. Also mediates the irreversible deamidation of specific glutamine residues to glutamic acid. The protein is Protein-glutamate methylesterase/protein-glutamine glutaminase of Nitrosomonas europaea (strain ATCC 19718 / CIP 103999 / KCTC 2705 / NBRC 14298).